The primary structure comprises 480 residues: Peptidase S41 family protein ustP (480 aa).

Residues 78–97 form a disordered region; it reads CMPNKKSRPPDPRPSLAVGK. The peptidase S41 domain stretch occupies residues 134–336; it reads DVAVLQLPTF…LKQQGVRSIV (203 aa).

The protein belongs to the peptidase S41A family.

Its pathway is mycotoxin biosynthesis. Its function is as follows. Peptidase S41 family protein; part of the gene cluster that mediates the biosynthesis of the secondary metabolite ustiloxin B, an antimitotic tetrapeptide. First, ustA is processed by the subtilisin-like endoprotease Kex2 that is outside the ustiloxin B gene cluster, at the C-terminal side of Arg-Lys, after transfer to Golgi apparatus through the endoplasmic reticulum (ER). Cleavage by KEX2 generates 16 peptides YAIG-I to YAIG-XVI. To process the precursor peptide further, at least two peptidases are necessary to cleave the N-terminal and C-terminal sides of the Tyr-Ala-Ile-Gly core peptide which serves as backbone for the synthesis of ustiloxin B, through cyclization and modification of the tyrosine with a non-protein coding amino acid, norvaline. One of the two peptidases must be the serine peptidase ustP; and the other pepdidase is probably ustH. Macrocyclization of the core peptide derived from ustA requires the tyrosinase ustQ, as well as the homologous oxidases ustYa and ustYb, and leads to the production of the first cyclization product N-desmethylustiloxin F. For the formation of N-desmethylustiloxin F, three oxidation steps are required, hydroxylation at the benzylic position, hydroxylation at either the aromatic ring of Tyr or beta-position of Ile, and oxidative cyclization. UstQ may catalyze the oxidation of a phenol moiety, whereas the ustYa and ustYb are most likely responsible for the remaining two-step oxidations. N-desmethylustiloxin F is then methylated by ustM to yield ustiloxin F which in turn substrate of the cytochrome P450 monooxygenase ustC which catalyzes the formation of S-deoxyustiloxin H. The flavoprotein monooxygenases ustF1 and ustF2 then participate in the modification of the side chain of S-deoxyustiloxin H, leading to the synthesis of an oxime intermediate, via ustiloxin H. Finally, carboxylative dehydration performed by the cysteine desulfurase-like protein ustD yields ustiloxin B. The chain is Peptidase S41 family protein ustP from Aspergillus flavus (strain ATCC 200026 / FGSC A1120 / IAM 13836 / NRRL 3357 / JCM 12722 / SRRC 167).